Consider the following 572-residue polypeptide: Proline--tRNA ligase (572 aa).

Belongs to the class-II aminoacyl-tRNA synthetase family. ProS type 1 subfamily. Homodimer.

Its subcellular location is the cytoplasm. It catalyses the reaction tRNA(Pro) + L-proline + ATP = L-prolyl-tRNA(Pro) + AMP + diphosphate. Functionally, catalyzes the attachment of proline to tRNA(Pro) in a two-step reaction: proline is first activated by ATP to form Pro-AMP and then transferred to the acceptor end of tRNA(Pro). As ProRS can inadvertently accommodate and process non-cognate amino acids such as alanine and cysteine, to avoid such errors it has two additional distinct editing activities against alanine. One activity is designated as 'pretransfer' editing and involves the tRNA(Pro)-independent hydrolysis of activated Ala-AMP. The other activity is designated 'posttransfer' editing and involves deacylation of mischarged Ala-tRNA(Pro). The misacylated Cys-tRNA(Pro) is not edited by ProRS. The polypeptide is Proline--tRNA ligase (Enterobacter sp. (strain 638)).